Consider the following 257-residue polypeptide: Imidazole glycerol phosphate synthase subunit HisF (257 aa).

Residues Asp-11 and Asp-130 contribute to the active site.

It belongs to the HisA/HisF family. Heterodimer of HisH and HisF.

It is found in the cytoplasm. It catalyses the reaction 5-[(5-phospho-1-deoxy-D-ribulos-1-ylimino)methylamino]-1-(5-phospho-beta-D-ribosyl)imidazole-4-carboxamide + L-glutamine = D-erythro-1-(imidazol-4-yl)glycerol 3-phosphate + 5-amino-1-(5-phospho-beta-D-ribosyl)imidazole-4-carboxamide + L-glutamate + H(+). It functions in the pathway amino-acid biosynthesis; L-histidine biosynthesis; L-histidine from 5-phospho-alpha-D-ribose 1-diphosphate: step 5/9. Functionally, IGPS catalyzes the conversion of PRFAR and glutamine to IGP, AICAR and glutamate. The HisF subunit catalyzes the cyclization activity that produces IGP and AICAR from PRFAR using the ammonia provided by the HisH subunit. The sequence is that of Imidazole glycerol phosphate synthase subunit HisF from Prochlorococcus marinus (strain SARG / CCMP1375 / SS120).